Here is a 309-residue protein sequence, read N- to C-terminus: Putative rhizopine-binding protein (309 aa).

The first 20 residues, 1 to 20, serve as a signal peptide directing secretion; the sequence is MKKFIIGIAAAVLVSTAAHA.

The protein belongs to the bacterial solute-binding protein 2 family.

The protein localises to the periplasm. In terms of biological role, involved in rhizopine (L-3-O-methyl-scyllo-inosamine) catabolism. Could be involved in its high affinity transport. This chain is Putative rhizopine-binding protein (mocB), found in Rhizobium meliloti (Ensifer meliloti).